Here is a 250-residue protein sequence, read N- to C-terminus: Acidic leucine-rich nuclear phosphoprotein 32 family member E (250 aa).

S8 carries the phosphoserine modification. LRR repeat units follow at residues E43 to P64, K65 to C87, and N89 to Q110. The LRRCT domain occupies C123–D161. 3 stretches are compositionally biased toward acidic residues: residues D149–E171, E178–E191, and I205–A227. Residues D149–D250 form a disordered region. The ZID domain stretch occupies residues E194–E247. Basic and acidic residues predominate over residues D228–A238. Positions E239–D250 are enriched in acidic residues.

This sequence belongs to the ANP32 family. As to quaternary structure, component of a SWR1-like complex. Interacts with H2A.Z/H2AZ1. Post-translationally, phosphorylated. The phosphorylation is nuclear localization signal (NLS)-dependent.

Its subcellular location is the cytoplasm. The protein resides in the nucleus. Histone chaperone that specifically mediates the genome-wide removal of histone H2A.Z/H2AZ1 from the nucleosome: removes H2A.Z/H2AZ1 from its normal sites of deposition, especially from enhancer and insulator regions. Not involved in deposition of H2A.Z/H2AZ1 in the nucleosome. May stabilize the evicted H2A.Z/H2AZ1-H2B dimer, thus shifting the equilibrium towards dissociation and the off-chromatin state. Inhibits activity of protein phosphatase 2A (PP2A). Does not inhibit protein phosphatase 1. May play a role in cerebellar development and synaptogenesis. This is Acidic leucine-rich nuclear phosphoprotein 32 family member E (anp32e) from Danio rerio (Zebrafish).